Here is a 176-residue protein sequence, read N- to C-terminus: ATP-dependent protease subunit HslV (176 aa).

The active site involves Thr-5. Residues Ala-161, Cys-164, and Thr-167 each coordinate Na(+).

This sequence belongs to the peptidase T1B family. HslV subfamily. As to quaternary structure, a double ring-shaped homohexamer of HslV is capped on each side by a ring-shaped HslU homohexamer. The assembly of the HslU/HslV complex is dependent on binding of ATP.

The protein localises to the cytoplasm. It carries out the reaction ATP-dependent cleavage of peptide bonds with broad specificity.. Allosterically activated by HslU binding. Protease subunit of a proteasome-like degradation complex believed to be a general protein degrading machinery. The sequence is that of ATP-dependent protease subunit HslV from Desulforamulus reducens (strain ATCC BAA-1160 / DSM 100696 / MI-1) (Desulfotomaculum reducens).